The sequence spans 480 residues: 2-phosphoxylose phosphatase 1 (480 aa).

At 1-6 (MLYRNR) the chain is on the cytoplasmic side. Residues 7–27 (FLVLLALAGLLAFLSLSLQFF) form a helical; Signal-anchor for type II membrane protein membrane-spanning segment. Residues 28 to 480 (HLIPVSTTKN…YYDACHGEGA (453 aa)) lie on the Lumenal side of the membrane. The active-site Nucleophile is His-97. N-linked (GlcNAc...) asparagine glycosylation is found at Asn-194, Asn-305, and Asn-354. The active-site Proton donor is the Asp-379.

Belongs to the histidine acid phosphatase family. In terms of assembly, interacts with B3GAT3; the interaction increases the 2-phosphoxylose phosphatase activity of PXYLP1 during completion of linkage region formation in a B3GAT3-mediated manner.

The protein localises to the golgi apparatus membrane. It carries out the reaction 3-O-[beta-D-GlcA-(1-&gt;3)-beta-D-Gal-(1-&gt;3)-beta-D-Gal-(1-&gt;4)-beta-D-2-O-P-Xyl]-L-seryl-[protein] + H2O = 3-O-(beta-D-GlcA-(1-&gt;3)-beta-D-Gal-(1-&gt;3)-beta-D-Gal-(1-&gt;4)-beta-D-Xyl)-L-seryl-[protein] + phosphate. Responsible for the 2-O-dephosphorylation of xylose in the glycosaminoglycan-protein linkage region of proteoglycans thereby regulating the amount of mature glycosaminoglycan (GAG) chains. Sulfated glycosaminoglycans (GAGs), including heparan sulfate and chondroitin sulfate, are synthesized on the so-called common GAG-protein linkage region (GlcUAbeta1-3Galbeta1-3Galbeta1-4Xylbeta1-O-Ser) of core proteins, which is formed by the stepwise addition of monosaccharide residues by the respective specific glycosyltransferases. Xylose 2-O-dephosphorylation during completion of linkage region formation is a prerequisite for the initiation and efficient elongation of the repeating disaccharide region of GAG chains. The chain is 2-phosphoxylose phosphatase 1 from Rattus norvegicus (Rat).